We begin with the raw amino-acid sequence, 256 residues long: Protein YIPF5 (256 aa).

Over 1 to 125 the chain is Cytoplasmic; sequence MSNFDNFNTD…ADGNIMNETD (125 aa). Residues 126-146 form a helical membrane-spanning segment; sequence LAGPMVFCLAFGATLLLAGKI. Position 147 (Gln-147) is a topological domain, lumenal. Residues 148–168 form a helical membrane-spanning segment; it reads FGYVYGISAIGCLGMYCLLNL. Residues 169–172 lie on the Cytoplasmic side of the membrane; it reads MSMT. The helical transmembrane segment at 173-193 threads the bilayer; that stretch reads GVSFGCVSSVLGYCLLPMIIL. Over 194–195 the chain is Lumenal; sequence SS. Residues 196–216 form a helical membrane-spanning segment; it reads FAVIFSLQGILGIVLAALIIG. The Cytoplasmic portion of the chain corresponds to 217–235; the sequence is WCSFSASKIFISALAMDGQ. A helical transmembrane segment spans residues 236 to 256; that stretch reads QVLVAYPCALLYGVFALISVF.

This sequence belongs to the YIP1 family.

It localises to the endoplasmic reticulum membrane. Its subcellular location is the golgi apparatus. It is found in the cis-Golgi network membrane. Functionally, plays a role in transport between endoplasmic reticulum and Golgi. This chain is Protein YIPF5 (yipf5), found in Xenopus tropicalis (Western clawed frog).